We begin with the raw amino-acid sequence, 193 residues long: Interleukin-18 (193 aa).

The propeptide occupies M1 to D36.

The protein belongs to the IL-1 family. In terms of assembly, forms a ternary complex with ligand-binding receptor subunit IL18R1 and signaling receptor subunit IL18RAP at the plasma membrane. Mature IL18 first binds to IL18R1 forming a low affinity binary complex, which then interacts with IL18RAP to form a high affinity ternary complex that signals inside the cell. Interacts with cargo receptor TMED10; the interaction mediates the translocation from the cytoplasm into the ERGIC (endoplasmic reticulum-Golgi intermediate compartment) and thereby secretion. In terms of processing, the pro-IL-18 precursor is processed by CASP1, CASP4 or CASP5 to yield its mature, active form. The pro-IL-18 precursor features autoinhibitory interactions between the propeptide and the post-cleavage-site region, preventing recognition by the IL18R1 receptor. Processing by CASP1, CASP4 or CASP5 induces conformational changes to generate critical receptor-binding sites. The mature form is then secreted and released in the extracellular milieu by passing through the gasdermin-D (GSDMD) pore. In contrast, cleavage by CASP3 inactivates IL18. In terms of tissue distribution, expressed in ovarian carcinoma but undetectable in normal ovarian epithelial cells. Resistant to proteolytic activation by caspase-1 and -4.

The protein localises to the cytoplasm. Its subcellular location is the cytosol. It is found in the secreted. Pro-inflammatory cytokine primarily involved in epithelial barrier repair, polarized T-helper 1 (Th1) cell and natural killer (NK) cell immune responses. Upon binding to IL18R1 and IL18RAP, forms a signaling ternary complex which activates NF-kappa-B, triggering synthesis of inflammatory mediators. Synergizes with IL12/interleukin-12 to induce IFNG synthesis from T-helper 1 (Th1) cells and natural killer (NK) cells. Involved in transduction of inflammation downstream of pyroptosis: its mature form is specifically released in the extracellular milieu by passing through the gasdermin-D (GSDMD) pore. The protein is Interleukin-18 of Homo sapiens (Human).